Here is a 269-residue protein sequence, read N- to C-terminus: Ribosomal RNA small subunit methyltransferase A (269 aa).

Residues Asn18, Leu20, Gly45, Glu66, Asp91, and Asn112 each coordinate S-adenosyl-L-methionine.

This sequence belongs to the class I-like SAM-binding methyltransferase superfamily. rRNA adenine N(6)-methyltransferase family. RsmA subfamily.

The protein resides in the cytoplasm. It carries out the reaction adenosine(1518)/adenosine(1519) in 16S rRNA + 4 S-adenosyl-L-methionine = N(6)-dimethyladenosine(1518)/N(6)-dimethyladenosine(1519) in 16S rRNA + 4 S-adenosyl-L-homocysteine + 4 H(+). Functionally, specifically dimethylates two adjacent adenosines (A1518 and A1519) in the loop of a conserved hairpin near the 3'-end of 16S rRNA in the 30S particle. May play a critical role in biogenesis of 30S subunits. The chain is Ribosomal RNA small subunit methyltransferase A from Shewanella loihica (strain ATCC BAA-1088 / PV-4).